The primary structure comprises 216 residues: Glycerol uptake facilitator protein-like 6 (216 aa).

A run of 2 helical transmembrane segments spans residues 5–25 (LAEF…VVIA) and 30–50 (LAIG…FGGI). Residues 56–58 (NPA) carry the NPA 1 motif. 3 helical membrane-spanning segments follow: residues 72–92 (ADAI…SAAV), 114–134 (IGSG…LMVI), and 147–167 (FAGL…LNLT). The NPA 2 signature appears at 172–174 (NPA). Residues 191–213 (LWVYILAPEVGAILAAFCARVMG) form a helical membrane-spanning segment.

Belongs to the MIP/aquaporin (TC 1.A.8) family.

Its subcellular location is the cell membrane. Functionally, probable transporter that facilitates the transmembrane diffusion of an unknown substrate. Is not permeable to water, dihydroxyacetone, glycerol, urea, H(2)O(2) and D/L-lactic acid. In Lactiplantibacillus plantarum (strain ATCC BAA-793 / NCIMB 8826 / WCFS1) (Lactobacillus plantarum), this protein is Glycerol uptake facilitator protein-like 6.